Here is a 433-residue protein sequence, read N- to C-terminus: Serine hydroxymethyltransferase (433 aa).

121–123 (AHV) serves as a coordination point for (6S)-5,6,7,8-tetrahydrofolate. N6-(pyridoxal phosphate)lysine is present on Lys227. Glu243 provides a ligand contact to (6S)-5,6,7,8-tetrahydrofolate.

The protein belongs to the SHMT family. As to quaternary structure, homodimer. Pyridoxal 5'-phosphate serves as cofactor.

It is found in the cytoplasm. It functions in the pathway amino-acid biosynthesis; glycine biosynthesis; glycine from L-serine: step 1/1. Functionally, catalyzes the reversible interconversion of serine and glycine with a modified folate serving as the one-carbon carrier. Also exhibits a pteridine-independent aldolase activity toward beta-hydroxyamino acids, producing glycine and aldehydes, via a retro-aldol mechanism. The sequence is that of Serine hydroxymethyltransferase from Saccharolobus islandicus (strain Y.G.57.14 / Yellowstone #1) (Sulfolobus islandicus).